We begin with the raw amino-acid sequence, 20 residues long: Manganese peroxidase H5 (20 aa).

Belongs to the peroxidase family. Ligninase subfamily.

The protein localises to the secreted. The catalysed reaction is 2 Mn(2+) + H2O2 + 2 H(+) = 2 Mn(3+) + 2 H2O. Its function is as follows. Catalyzes the oxidation of Mn(2+) to Mn(3+). The latter, acting as a diffusible redox mediator, is capable of oxidizing a variety of lignin compounds. The sequence is that of Manganese peroxidase H5 from Phanerodontia chrysosporium (White-rot fungus).